Consider the following 272-residue polypeptide: Undecaprenyl-diphosphatase (272 aa).

The next 7 helical transmembrane spans lie at 6–26 (SLLI…LPVS), 45–65 (AKTF…VMFW), 92–112 (THIL…HDVI), 115–135 (LFYP…LLAA), 189–209 (YAAS…ATVL), 225–245 (MFAV…KTFL), and 251–271 (ISFV…YMVF).

Belongs to the UppP family.

It is found in the cell inner membrane. The enzyme catalyses di-trans,octa-cis-undecaprenyl diphosphate + H2O = di-trans,octa-cis-undecaprenyl phosphate + phosphate + H(+). Its function is as follows. Catalyzes the dephosphorylation of undecaprenyl diphosphate (UPP). Confers resistance to bacitracin. This Pectobacterium carotovorum subsp. carotovorum (strain PC1) protein is Undecaprenyl-diphosphatase.